The primary structure comprises 168 residues: Signal peptidase I V (168 aa).

Residues 1 to 6 (MKKRFW) are Cytoplasmic-facing. A helical transmembrane segment spans residues 7-26 (FLAGVVSVVLAIQVKNAVFI). Topologically, residues 27–168 (DYKVEGVSMN…NIVGVISDAE (142 aa)) are extracellular. Catalysis depends on residues Ser34 and Lys75.

This sequence belongs to the peptidase S26 family.

The protein resides in the cell membrane. It catalyses the reaction Cleavage of hydrophobic, N-terminal signal or leader sequences from secreted and periplasmic proteins.. The chain is Signal peptidase I V (sipV) from Bacillus subtilis (strain 168).